The following is a 1046-amino-acid chain: uncharacterized protein (1046 aa).

The segment covering 594–615 (LNSIPSDSSSSGSSRKSSPRGS) has biased composition (low complexity). A disordered region spans residues 594 to 622 (LNSIPSDSSSSGSSRKSSPRGSPNLGEAP).

This is an uncharacterized protein from Invertebrate iridescent virus 6 (IIV-6).